The primary structure comprises 501 residues: Cytochrome P450 monooxygenase ccsG (501 aa).

Positions 1-28 (MMITLFTLAVVSIGFFLWWLLTVQPAVT) are cleaved as a signal peptide. Asn115 and Asn154 each carry an N-linked (GlcNAc...) asparagine glycan. Residue Cys443 participates in heme binding.

Belongs to the cytochrome P450 family. The cofactor is heme.

It participates in mycotoxin biosynthesis. Cytochrome P450 monooxygenase; part of the gene cluster that mediates the biosynthesis of a family of the mycotoxins cytochalasins E and K. The hybrid PKS-NRPS synthetase ccsA and the enoyl reductase ccsC are responsible for fusion of phenylalanine with an octaketide backbone and subsequent release of the stable tetramic acid precursor. The polyketide synthase module (PKS) of the PKS-NRPS ccsA is responsible for the synthesis of the octaketide backbone. The downstream nonribosomal peptide synthetase (NRPS) amidates the carboxyl end of the octaketide with a phenylalanine. A reductase-like domain (R) at the C-terminus catalyzes the reductive release of the polyketide-amino acid intermediate. Because ccsA lacks a designated enoylreductase (ER) domain, the required activity is provided the enoyl reductase ccsC. Upon formation of the 11-membered carbocycle-fused perhydroisoindolone intermediate, a number of oxidative steps are required to afford the final cytochalasin E and K, including two hydroxylations at C17 and C18, one alcohol oxidation at C17, one epoxidation at C6 and C7 and two Baeyer-Villiger oxidations. The oxidative modification at C17, C18 and the C6-C7 epoxidation are likely to be catalyzed by the two cytochrome P450 oxygenases ccsD and ccsG. CcsD may be responsible for the epoxidation of the C6-C7 double bond. CcsG may be responsible for the successive oxidative modifications at C17 and C18. The double Baeyer-Villiger oxidations of ketocytochalasin to precytochalasin and cytochalasin Z(16) are among the final steps leading to cytochalasin E and K and are catalyzed by ccsB. The first oxygen insertion step follows that of the classic BVMO mechanism, generating the ester precytochalasin. Release of precytochalasin into an aqueous environment can generate the shunt product iso-precytochalasin through spontaneous isomerization. Alternatively, precytochalasin can undergo further oxidation by ccsB to yield the in-line carbonate-containing cytochalasin Z(16). Cytochalasin Z(16) is a precursor to cytochalasin E and cytochalasin K, whereas iso-precytochalasin is a precursor to cytochalasin Z(17) and rosellichalasin. The hydrolyase ccsE may catalyze hydrolysis of epoxide bond in cytochalasin E to afford cytochalasin K. The function of ccsF has not been assigned but it may play a role in post-PKS-NRPS biosynthetic step, resistance or transport of cytochalasins and related PKS-NRPS products. This chain is Cytochrome P450 monooxygenase ccsG, found in Aspergillus clavatus (strain ATCC 1007 / CBS 513.65 / DSM 816 / NCTC 3887 / NRRL 1 / QM 1276 / 107).